We begin with the raw amino-acid sequence, 34 residues long: MEALVYTFLLVSTLGIIFFAIFFREPPTIRTKKN.

The chain crosses the membrane as a helical span at residues 3-23 (ALVYTFLLVSTLGIIFFAIFF).

It belongs to the PsbT family. As to quaternary structure, PSII is composed of 1 copy each of membrane proteins PsbA, PsbB, PsbC, PsbD, PsbE, PsbF, PsbH, PsbI, PsbJ, PsbK, PsbL, PsbM, PsbT, PsbY, PsbZ, Psb30/Ycf12, at least 3 peripheral proteins of the oxygen-evolving complex and a large number of cofactors. It forms dimeric complexes.

The protein resides in the plastid. It localises to the chloroplast thylakoid membrane. In terms of biological role, found at the monomer-monomer interface of the photosystem II (PS II) dimer, plays a role in assembly and dimerization of PSII. PSII is a light-driven water plastoquinone oxidoreductase, using light energy to abstract electrons from H(2)O, generating a proton gradient subsequently used for ATP formation. This is Photosystem II reaction center protein T from Solanum lycopersicum (Tomato).